The following is a 549-amino-acid chain: Oxygen-dependent choline dehydrogenase (549 aa).

4-33 (DFVIIGSGSAGSAMAYRLSENGRYSVIVIE) contacts FAD. Residue histidine 465 is the Proton acceptor of the active site.

This sequence belongs to the GMC oxidoreductase family. FAD serves as cofactor.

It carries out the reaction choline + A = betaine aldehyde + AH2. The catalysed reaction is betaine aldehyde + NAD(+) + H2O = glycine betaine + NADH + 2 H(+). It participates in amine and polyamine biosynthesis; betaine biosynthesis via choline pathway; betaine aldehyde from choline (cytochrome c reductase route): step 1/1. Its function is as follows. Involved in the biosynthesis of the osmoprotectant glycine betaine. Catalyzes the oxidation of choline to betaine aldehyde and betaine aldehyde to glycine betaine at the same rate. The polypeptide is Oxygen-dependent choline dehydrogenase (Brucella suis biovar 1 (strain 1330)).